We begin with the raw amino-acid sequence, 166 residues long: Bacterial microcompartment shell protein EutK (166 aa).

In terms of domain architecture, BMC spans Ala4–Thr88. Positions Glu109 to Pro165 constitute a EutK-Ctail domain.

It belongs to the bacterial microcompartments protein family. Monomeric in solution.

The protein resides in the bacterial microcompartment. The protein operates within amine and polyamine degradation; ethanolamine degradation. Functionally, probably a minor component of the bacterial microcompartment (BMC) shell dedicated to ethanolamine degradation. It might bind nucleic acids. The chain is Bacterial microcompartment shell protein EutK (eutK) from Escherichia coli (strain K12).